Here is a 132-residue protein sequence, read N- to C-terminus: 3'-dehydrocarminate deglycosidase beta subunit (132 aa).

This sequence belongs to the C-glycoside deglycosidase beta subunit family. Heterodimer composed of an alpha subunit (CarB) and a beta subunit (CarC). Mg(2+) serves as cofactor.

The catalysed reaction is 3'-dehydrocarminate + H(+) = kermesate + 1,5-anhydro-D-erythro-hex-1-en-3-ulose. With respect to regulation, activity is strongly reduced in the presence of chelating agents. Carbon-carbon bond-cleaving enzyme which participates in a carminate degradation pathway. Cleaves the C-C bond in 3'-dehydrocarminate to form kermesate. Also shows weak activity with other C-glycosides, such as 3''-dehydropuerarin (3''-oxo-puerarin), 3''-dehydroisoorientin (3''-oxo-homoorientin) and 3'-dehydromangiferin (3'-oxo-mangiferin). This chain is 3'-dehydrocarminate deglycosidase beta subunit, found in Microbacterium sp.